The chain runs to 272 residues: Phosphatidylglycerol--prolipoprotein diacylglyceryl transferase (272 aa).

Helical transmembrane passes span 17–37, 55–75, 90–110, 125–145, 174–194, 202–222, and 230–250; these read LQVH…WGLA, LVFY…VLFY, VWTG…AMLF, FVAP…FIGG, PSQI…LWWF, MAVS…MEFF, and GFIL…MLLI. Arg-138 lines the a 1,2-diacyl-sn-glycero-3-phospho-(1'-sn-glycerol) pocket.

This sequence belongs to the Lgt family.

It localises to the cell inner membrane. It catalyses the reaction L-cysteinyl-[prolipoprotein] + a 1,2-diacyl-sn-glycero-3-phospho-(1'-sn-glycerol) = an S-1,2-diacyl-sn-glyceryl-L-cysteinyl-[prolipoprotein] + sn-glycerol 1-phosphate + H(+). Its pathway is protein modification; lipoprotein biosynthesis (diacylglyceryl transfer). Functionally, catalyzes the transfer of the diacylglyceryl group from phosphatidylglycerol to the sulfhydryl group of the N-terminal cysteine of a prolipoprotein, the first step in the formation of mature lipoproteins. This Acinetobacter baumannii (strain AB307-0294) protein is Phosphatidylglycerol--prolipoprotein diacylglyceryl transferase.